A 361-amino-acid polypeptide reads, in one-letter code: MAPIKVGINGFGRIGRMVFQAICDQGLIGTEIDVVAVVDMSTNAEYFAYQMKHDTVHGRPKYTVEAVKSSPSVETADVLVVNGHRIKCVKAQRNPADLPWGKLGVDYVIESTGLFTDKLKAEGHIKGGAKKVVISAPASGGAKTIVMGVNQHEYSPASHHVVSNASCTTNCLAPIVHVLTKENFGIETGLMTTIHSYTATQKTVDGVSLKDWRGGRAAAVNIIPSTTGAAKAVGMVIPSTKGKLTGMSFRVPTPDVSVVDLTFRATRDTSIQEIDKAIKKAAQTYMKGILGFTDEELVSADFINDNRSSVYDSKATLQNNLPGEKRFFKVVSWYDNEWAYSHRVVDLVRYMAAKDAASSKM.

NAD(+)-binding positions include 13 to 14 (RI), Asp39, Gln92, and Ser135. Residues 166 to 168 (SCT), Thr198, 227 to 228 (TG), and Arg250 each bind D-glyceraldehyde 3-phosphate. Residue Cys167 is the Nucleophile of the active site. NAD(+) is bound at residue Asn336. The Microbody targeting signal signature appears at 359–361 (SKM).

This sequence belongs to the glyceraldehyde-3-phosphate dehydrogenase family. Homotetramer.

It is found in the glycosome. The catalysed reaction is D-glyceraldehyde 3-phosphate + phosphate + NAD(+) = (2R)-3-phospho-glyceroyl phosphate + NADH + H(+). It participates in carbohydrate degradation; glycolysis; pyruvate from D-glyceraldehyde 3-phosphate: step 1/5. The chain is Glyceraldehyde-3-phosphate dehydrogenase, glycosomal (GAPG) from Leishmania mexicana.